The following is a 218-amino-acid chain: Response regulator UvrY (218 aa).

The Response regulatory domain maps to N3–Y119. The residue at position 54 (D54) is a 4-aspartylphosphate. In terms of domain architecture, HTH luxR-type spans T143–G208. Positions V167 to Y186 form a DNA-binding region, H-T-H motif.

In terms of processing, phosphorylated and activated by BarA.

It is found in the cytoplasm. Member of the two-component regulatory system UvrY/BarA involved in the regulation of carbon metabolism via the CsrA/CsrB regulatory system. UvrY activates the transcription of the untranslated csrB RNA and of barA, in an autoregulatory loop. Mediates the effects of CsrA on csrB RNA by BarA-dependent and BarA-independent mechanisms. The chain is Response regulator UvrY (uvrY) from Escherichia coli O157:H7.